The primary structure comprises 108 residues: uncharacterized protein (108 aa).

To M.jannaschii MJ1245 and M.thermoautotrophicum MTH1110.

This is an uncharacterized protein from Methanocaldococcus jannaschii (strain ATCC 43067 / DSM 2661 / JAL-1 / JCM 10045 / NBRC 100440) (Methanococcus jannaschii).